Here is a 226-residue protein sequence, read N- to C-terminus: ATP synthase F(0) complex subunit a (226 aa).

Helical transmembrane passes span 6-26 (FAPF…IITF), 68-88 (WTLM…LGLL), 97-117 (QLSM…IMGF), 138-158 (IPML…ALAV), 164-184 (ITAG…LSSI), and 195-215 (ILFL…YVFT).

The protein belongs to the ATPase A chain family. Component of the ATP synthase complex composed at least of ATP5F1A/subunit alpha, ATP5F1B/subunit beta, ATP5MC1/subunit c (homooctomer), MT-ATP6/subunit a, MT-ATP8/subunit 8, ATP5ME/subunit e, ATP5MF/subunit f, ATP5MG/subunit g, ATP5MK/subunit k, ATP5MJ/subunit j, ATP5F1C/subunit gamma, ATP5F1D/subunit delta, ATP5F1E/subunit epsilon, ATP5PF/subunit F6, ATP5PB/subunit b, ATP5PD/subunit d, ATP5PO/subunit OSCP. ATP synthase complex consists of a soluble F(1) head domain (subunits alpha(3) and beta(3)) - the catalytic core - and a membrane F(0) domain - the membrane proton channel (subunits c, a, 8, e, f, g, k and j). These two domains are linked by a central stalk (subunits gamma, delta, and epsilon) rotating inside the F1 region and a stationary peripheral stalk (subunits F6, b, d, and OSCP). Interacts with DNAJC30; interaction is direct.

The protein resides in the mitochondrion inner membrane. The catalysed reaction is H(+)(in) = H(+)(out). Its function is as follows. Subunit a, of the mitochondrial membrane ATP synthase complex (F(1)F(0) ATP synthase or Complex V) that produces ATP from ADP in the presence of a proton gradient across the membrane which is generated by electron transport complexes of the respiratory chain. ATP synthase complex consist of a soluble F(1) head domain - the catalytic core - and a membrane F(1) domain - the membrane proton channel. These two domains are linked by a central stalk rotating inside the F(1) region and a stationary peripheral stalk. During catalysis, ATP synthesis in the catalytic domain of F(1) is coupled via a rotary mechanism of the central stalk subunits to proton translocation. With the subunit c (ATP5MC1), forms the proton-conducting channel in the F(0) domain, that contains two crucial half-channels (inlet and outlet) that facilitate proton movement from the mitochondrial intermembrane space (IMS) into the matrix. Protons are taken up via the inlet half-channel and released through the outlet half-channel, following a Grotthuss mechanism. The chain is ATP synthase F(0) complex subunit a from Didelphis virginiana (North American opossum).